The chain runs to 170 residues: 3-hydroxydecanoyl-[acyl-carrier-protein] dehydratase (170 aa).

The active site involves H71.

This sequence belongs to the thioester dehydratase family. FabA subfamily. In terms of assembly, homodimer.

The protein localises to the cytoplasm. The catalysed reaction is a (3R)-hydroxyacyl-[ACP] = a (2E)-enoyl-[ACP] + H2O. The enzyme catalyses (3R)-hydroxydecanoyl-[ACP] = (2E)-decenoyl-[ACP] + H2O. It carries out the reaction (2E)-decenoyl-[ACP] = (3Z)-decenoyl-[ACP]. It functions in the pathway lipid metabolism; fatty acid biosynthesis. Functionally, necessary for the introduction of cis unsaturation into fatty acids. Catalyzes the dehydration of (3R)-3-hydroxydecanoyl-ACP to E-(2)-decenoyl-ACP and then its isomerization to Z-(3)-decenoyl-ACP. Can catalyze the dehydratase reaction for beta-hydroxyacyl-ACPs with saturated chain lengths up to 16:0, being most active on intermediate chain length. The protein is 3-hydroxydecanoyl-[acyl-carrier-protein] dehydratase of Chelativorans sp. (strain BNC1).